Consider the following 234-residue polypeptide: Opacity protein opA55 (234 aa).

Ala-1 is a signal peptide.

Belongs to the opacity porin family.

It localises to the cell outer membrane. Its function is as follows. Implicated in a number of adherence functions. OPA proteins are implicated in pathogenesis and are subject to phase variation. The chain is Opacity protein opA55 (opaE) from Neisseria gonorrhoeae.